Consider the following 116-residue polypeptide: Putative superoxide reductase (116 aa).

Fe cation contacts are provided by H20, H46, H52, C101, and H104.

It belongs to the desulfoferrodoxin family. Fe cation is required as a cofactor.

The catalysed reaction is reduced [rubredoxin] + superoxide + 2 H(+) = oxidized [rubredoxin] + H2O2. In terms of biological role, uses electrons from reduced NADP, by way of rubredoxin and an oxidoreductase, to catalyze the reduction of superoxide to hydrogen peroxide. This chain is Putative superoxide reductase, found in Methanocaldococcus jannaschii (strain ATCC 43067 / DSM 2661 / JAL-1 / JCM 10045 / NBRC 100440) (Methanococcus jannaschii).